Consider the following 130-residue polypeptide: Small ribosomal subunit protein uS9 (130 aa).

It belongs to the universal ribosomal protein uS9 family.

This chain is Small ribosomal subunit protein uS9, found in Bacillus licheniformis (strain ATCC 14580 / DSM 13 / JCM 2505 / CCUG 7422 / NBRC 12200 / NCIMB 9375 / NCTC 10341 / NRRL NRS-1264 / Gibson 46).